The following is a 475-amino-acid chain: Peroxisome proliferator-activated receptor gamma (475 aa).

At serine 82 the chain carries Phosphoserine; by MAPK. A DNA-binding region (nuclear receptor) is located at residues 106–180 (AIECRVCSDK…VGMSHNAIRF (75 aa)). 2 consecutive NR C4-type zinc fingers follow at residues 109-129 (CRVCSDKASGFHYGVHACEGC) and 146-168 (CDLNCRIHKKSRNKCQYCRFQKC). Positions 175–250 (HNAIRFGRMP…DKSPFVIYDM (76 aa)) are interaction with FAM120B. The region spanning 208–473 (DLRALAKHLY…HPLLQEIYKD (266 aa)) is the NR LBD domain. Lysine 222 is covalently cross-linked (Glycyl lysine isopeptide (Lys-Gly) (interchain with G-Cter in ubiquitin)). The 9aaTAD motif lies at 465 to 473 (PLLQEIYKD).

This sequence belongs to the nuclear hormone receptor family. NR1 subfamily. In terms of assembly, interacts with FOXO1 (acetylated form). Heterodimer with other nuclear receptors, such as RXRA. The heterodimer with the retinoic acid receptor RXRA is called adipocyte-specific transcription factor ARF6. Interacts with NCOA6 coactivator, leading to a strong increase in transcription of target genes. Interacts with coactivator PPARBP, leading to a mild increase in transcription of target genes. Interacts with NOCA7 in a ligand-inducible manner. Interacts with NCOA1 and NCOA2 LXXLL motifs. Interacts with ASXL1, ASXL2, DNTTIP2, FAM120B, MAP2K1/MEK1, NR0B2, PDPK1, PRDM16, PRMT2 and TGFB1I1. Interacts (when activated by agonist) with PPP5C. Interacts with HELZ2 and THRAP3; the interaction stimulates the transcriptional activity of PPARG. Interacts with PER2, the interaction is ligand dependent and blocks PPARG recruitment to target promoters. Interacts with NOCT. Interacts with ACTN4. Interacts (when in the liganded conformation) with GPS2. Interacts with CRY1 and CRY2 in a ligand-dependent manner. In the absence of hormonal ligand, interacts with TACC1. In macrophages, interacts with PAQR3 and STUB1; the interactions promote PPARG poylubiquitination and STUB1-mediated degradation. In terms of processing, phosphorylated at basal conditions and dephosphorylated when treated with the ligand. May be dephosphorylated by PPP5C. The phosphorylated form may be inactive and dephosphorylation induces adipogenic activity. Post-translationally, ubiquitinated by E3 ubiquitin-protein ligase complex containing FBXO9; leading to proteasomal degradation. Ubiquitinated at Lys-222 by TRIM55 leading to proteasomal degradation. Ubiquitinated by E3 ubiquitin-protein ligase STUB1/CHIP; leading to proteasomal degradation.

The protein localises to the nucleus. It localises to the cytoplasm. Its activity is regulated as follows. PDPK1 activates its transcriptional activity independently of its kinase activity. Nuclear receptor that binds peroxisome proliferators such as hypolipidemic drugs and fatty acids. Once activated by a ligand, the nuclear receptor binds to DNA specific PPAR response elements (PPRE) and modulates the transcription of its target genes, such as acyl-CoA oxidase. It therefore controls the peroxisomal beta-oxidation pathway of fatty acids. Key regulator of adipocyte differentiation and glucose homeostasis. ARF6 acts as a key regulator of the tissue-specific adipocyte P2 (aP2) enhancer. Acts as a critical regulator of gut homeostasis by suppressing NF-kappa-B-mediated pro-inflammatory responses. Plays a role in the regulation of cardiovascular circadian rhythms by regulating the transcription of BMAL1 in the blood vessels. The polypeptide is Peroxisome proliferator-activated receptor gamma (PPARG) (Oryctolagus cuniculus (Rabbit)).